We begin with the raw amino-acid sequence, 212 residues long: ER lumen protein-retaining receptor 2 (212 aa).

The Lumenal segment spans residues M1–F4. The helical transmembrane segment at R5 to W24 threads the bilayer. Residues N25–I32 are Cytoplasmic-facing. The chain crosses the membrane as a helical span at residues S33–F52. The segment at R47–Y48 is interaction with the K-D-E-L motif on target proteins. The Lumenal portion of the chain corresponds to T53–L58. The helical transmembrane segment at Y59–Y79 threads the bilayer. At M80–T92 the chain is on the cytoplasmic side. The helical transmembrane segment at F93–N110 threads the bilayer. Topologically, residues H111–L116 are lumenal. The chain crosses the membrane as a helical span at residues E117–L135. At F136–T149 the chain is on the cytoplasmic side. Residues H150 to W168 form a helical membrane-spanning segment. The interaction with the K-D-E-L motif on target proteins stretch occupies residues R159–R169. Topologically, residues R169–L178 are lumenal. The helical transmembrane segment at I179 to V199 threads the bilayer. The Cytoplasmic portion of the chain corresponds to T200–A212. Residues K204 to K207 are important for recycling of cargo proteins with the sequence motif K-D-E-L from the Golgi to the endoplasmic reticulum.

Belongs to the ERD2 family.

It is found in the endoplasmic reticulum membrane. Its subcellular location is the golgi apparatus membrane. It localises to the cytoplasmic vesicle. The protein localises to the COPI-coated vesicle membrane. Functionally, receptor for the C-terminal sequence motif K-D-E-L that is present on endoplasmic reticulum resident proteins and that mediates their recycling from the Golgi back to the endoplasmic reticulum. Binding is pH dependent, and is optimal at pH 5-5.4. This chain is ER lumen protein-retaining receptor 2 (kdelr2), found in Xenopus laevis (African clawed frog).